Consider the following 193-residue polypeptide: Peptidyl-tRNA hydrolase (193 aa).

Y17 contributes to the tRNA binding site. Residue H22 is the Proton acceptor of the active site. Residues Y68, N70, and N116 each contribute to the tRNA site.

Belongs to the PTH family. As to quaternary structure, monomer.

The protein resides in the cytoplasm. It catalyses the reaction an N-acyl-L-alpha-aminoacyl-tRNA + H2O = an N-acyl-L-amino acid + a tRNA + H(+). Functionally, hydrolyzes ribosome-free peptidyl-tRNAs (with 1 or more amino acids incorporated), which drop off the ribosome during protein synthesis, or as a result of ribosome stalling. Catalyzes the release of premature peptidyl moieties from peptidyl-tRNA molecules trapped in stalled 50S ribosomal subunits, and thus maintains levels of free tRNAs and 50S ribosomes. The sequence is that of Peptidyl-tRNA hydrolase from Chromobacterium violaceum (strain ATCC 12472 / DSM 30191 / JCM 1249 / CCUG 213 / NBRC 12614 / NCIMB 9131 / NCTC 9757 / MK).